A 355-amino-acid chain; its full sequence is Methylthioribose-1-phosphate isomerase (355 aa).

Substrate contacts are provided by residues 50–52 (RGA), Arg-93, and Gln-198. Asp-239 functions as the Proton donor in the catalytic mechanism. 249 to 250 (NK) serves as a coordination point for substrate.

Belongs to the eIF-2B alpha/beta/delta subunits family. MtnA subfamily. As to quaternary structure, homodimer.

The enzyme catalyses 5-(methylsulfanyl)-alpha-D-ribose 1-phosphate = 5-(methylsulfanyl)-D-ribulose 1-phosphate. It functions in the pathway amino-acid biosynthesis; L-methionine biosynthesis via salvage pathway; L-methionine from S-methyl-5-thio-alpha-D-ribose 1-phosphate: step 1/6. Functionally, catalyzes the interconversion of methylthioribose-1-phosphate (MTR-1-P) into methylthioribulose-1-phosphate (MTRu-1-P). This Geobacillus thermodenitrificans (strain NG80-2) protein is Methylthioribose-1-phosphate isomerase.